The following is a 627-amino-acid chain: Pescadillo homolog (627 aa).

The BRCT domain maps to 321–414 (RLRTLFKGLK…QLLPTNKYFI (94 aa)). Disordered stretches follow at residues 450–469 (HVQS…ETVD), 488–562 (YKKF…LQAR), and 595–627 (TIEA…KLGK). Serine 453 and serine 457 each carry phosphoserine. Acidic residues-rich tracts occupy residues 454-469 (DDDS…ETVD) and 497-521 (VNED…EELD). Residues 507 to 538 (DDDNEDDDEEEEELDEKTKRLQEEKQKMSVQS) are a coiled coil. Residues 522–533 (EKTKRLQEEKQK) are compositionally biased toward basic and acidic residues. A compositionally biased stretch (basic residues) spans 540-549 (KVHKVNKRQV). 2 stretches are compositionally biased toward basic and acidic residues: residues 550-559 (HKAEVDEHRL) and 595-615 (TIEA…RKEA). The stretch at 582–625 (KEKEEWLLRKKRRTIEASEKEARKTAKREARKEAAAAAAKASKL) forms a coiled coil. Residues 616–627 (AAAAAKASKLGK) show a composition bias toward low complexity.

It belongs to the pescadillo family.

The protein resides in the nucleus. Its subcellular location is the nucleolus. The protein localises to the nucleoplasm. In terms of biological role, required for maturation of ribosomal RNAs and formation of the large ribosomal subunit. This Drosophila sechellia (Fruit fly) protein is Pescadillo homolog.